The primary structure comprises 228 residues: Aldehyde dehydrogenase 9 (228 aa).

NAD(+) is bound at residue 76–81; the sequence is GSTETA. Catalysis depends on residues Glu99 and Cys132.

This sequence belongs to the aldehyde dehydrogenase family.

It catalyses the reaction an aldehyde + NAD(+) + H2O = a carboxylate + NADH + 2 H(+). Its pathway is alcohol metabolism; ethanol degradation; acetate from ethanol: step 2/2. The sequence is that of Aldehyde dehydrogenase 9 (ALDH9) from Polyandrocarpa misakiensis (Tunicate).